We begin with the raw amino-acid sequence, 353 residues long: Quinolinate synthase (353 aa).

Residues H47 and S68 each coordinate iminosuccinate. Position 113 (C113) interacts with [4Fe-4S] cluster. Iminosuccinate-binding positions include 139–141 (YAN) and S156. C200 provides a ligand contact to [4Fe-4S] cluster. Iminosuccinate contacts are provided by residues 226-228 (HPE) and T243. C297 serves as a coordination point for [4Fe-4S] cluster.

It belongs to the quinolinate synthase family. Type 1 subfamily. It depends on [4Fe-4S] cluster as a cofactor.

The protein resides in the cytoplasm. The catalysed reaction is iminosuccinate + dihydroxyacetone phosphate = quinolinate + phosphate + 2 H2O + H(+). The protein operates within cofactor biosynthesis; NAD(+) biosynthesis; quinolinate from iminoaspartate: step 1/1. Its function is as follows. Catalyzes the condensation of iminoaspartate with dihydroxyacetone phosphate to form quinolinate. The chain is Quinolinate synthase from Pectobacterium carotovorum subsp. carotovorum (strain PC1).